Reading from the N-terminus, the 569-residue chain is GATOR1 complex protein NPRL3 (569 aa).

Disordered regions lie at residues 27–60 and 441–476; these read PFQRSQEHPASQTNKPRSRYAVNNTGEHADDQDG and TPNALSFGSPTSSDDMTLTSPSMDNSSAELLPSGDS. Composition is skewed to polar residues over residues 34–52 and 441–468; these read HPASQTNKPRSRYAVNNTG and TPNALSFGSPTSSDDMTLTSPSMDNSSA. Ser-476 is subject to Phosphoserine.

It belongs to the NPR3 family. Within the GATOR complex, component of the GATOR1 subcomplex, made of DEPDC5, NPRL2 and NPRL3. GATOR1 mediates the strong interaction of the GATOR complex with small GTPases Rag (RagA/RRAGA, RagB/RRAGB, RagC/RRAGC and/or RagD/RRAGD) heterodimers. GATOR1 interacts with GPR155/LYCHOS; interaction takes place in presence of cholesterol and prevents interaction between GATOR1 and KICSTOR.

The protein resides in the lysosome membrane. Its function is as follows. As a component of the GATOR1 complex functions as an inhibitor of the amino acid-sensing branch of the mTORC1 pathway. In response to amino acid depletion, the GATOR1 complex has GTPase activating protein (GAP) activity and strongly increases GTP hydrolysis by RagA/RRAGA (or RagB/RRAGB) within heterodimeric Rag complexes, thereby turning them into their inactive GDP-bound form, releasing mTORC1 from lysosomal surface and inhibiting mTORC1 signaling. In the presence of abundant amino acids, the GATOR1 complex is negatively regulated by GATOR2, the other GATOR subcomplex, in this amino acid-sensing branch of the TORC1 pathway. In Mus musculus (Mouse), this protein is GATOR1 complex protein NPRL3.